We begin with the raw amino-acid sequence, 293 residues long: Ribosomal protein L11 methyltransferase (293 aa).

Thr145, Gly166, Asp188, and Asn230 together coordinate S-adenosyl-L-methionine.

This sequence belongs to the methyltransferase superfamily. PrmA family.

Its subcellular location is the cytoplasm. The catalysed reaction is L-lysyl-[protein] + 3 S-adenosyl-L-methionine = N(6),N(6),N(6)-trimethyl-L-lysyl-[protein] + 3 S-adenosyl-L-homocysteine + 3 H(+). In terms of biological role, methylates ribosomal protein L11. This is Ribosomal protein L11 methyltransferase from Escherichia coli (strain 55989 / EAEC).